We begin with the raw amino-acid sequence, 443 residues long: C4-dicarboxylate transport protein (443 aa).

The next 10 helical transmembrane spans lie at 10 to 30, 46 to 66, 78 to 98, 130 to 150, 152 to 172, 199 to 219, 224 to 244, 291 to 311, 332 to 352, and 354 to 374; these read SLYF…HFYP, LIKM…IAGM, YALL…LIVV, SIVG…FANG, ILQV…LGAY, PLGA…GSLV, LMIC…GAIC, VVGL…SIYL, ITLL…TGSG, and IVLA…LALI. Residues 415 to 443 form a disordered region; the sequence is ELASGGRPITDTRETDDLGVAEGPAPSIK.

Belongs to the dicarboxylate/amino acid:cation symporter (DAACS) (TC 2.A.23) family.

The protein localises to the cell inner membrane. Responsible for the transport of dicarboxylates such as succinate, fumarate, and malate from the periplasm across the membrane. This chain is C4-dicarboxylate transport protein, found in Pseudomonas fluorescens (strain ATCC BAA-477 / NRRL B-23932 / Pf-5).